A 536-amino-acid chain; its full sequence is CTP synthase (536 aa).

Positions 1–267 (MTKFIFVTGG…DDIVIKRLQL (267 aa)) are amidoligase domain. Serine 13 contributes to the CTP binding site. Position 13 (serine 13) interacts with UTP. 14-19 (SLGKGI) is a binding site for ATP. Tyrosine 54 serves as a coordination point for L-glutamine. An ATP-binding site is contributed by aspartate 71. Aspartate 71 and glutamate 141 together coordinate Mg(2+). CTP contacts are provided by residues 148–150 (DIE), 188–193 (KTKPTQ), and lysine 224. UTP contacts are provided by residues 188–193 (KTKPTQ) and lysine 224. 240 to 242 (RDA) lines the ATP pocket. The 243-residue stretch at 293-535 (TIGLVGKYVS…IEASLKYQQN (243 aa)) folds into the Glutamine amidotransferase type-1 domain. L-glutamine is bound at residue glycine 355. The active-site Nucleophile; for glutamine hydrolysis is the cysteine 382. Residues 383–386 (LGMQ), glutamate 406, and arginine 463 contribute to the L-glutamine site. Active-site residues include histidine 508 and glutamate 510.

It belongs to the CTP synthase family. In terms of assembly, homotetramer.

The enzyme catalyses UTP + L-glutamine + ATP + H2O = CTP + L-glutamate + ADP + phosphate + 2 H(+). It catalyses the reaction L-glutamine + H2O = L-glutamate + NH4(+). It carries out the reaction UTP + NH4(+) + ATP = CTP + ADP + phosphate + 2 H(+). It functions in the pathway pyrimidine metabolism; CTP biosynthesis via de novo pathway; CTP from UDP: step 2/2. With respect to regulation, allosterically activated by GTP, when glutamine is the substrate; GTP has no effect on the reaction when ammonia is the substrate. The allosteric effector GTP functions by stabilizing the protein conformation that binds the tetrahedral intermediate(s) formed during glutamine hydrolysis. Inhibited by the product CTP, via allosteric rather than competitive inhibition. Functionally, catalyzes the ATP-dependent amination of UTP to CTP with either L-glutamine or ammonia as the source of nitrogen. Regulates intracellular CTP levels through interactions with the four ribonucleotide triphosphates. The chain is CTP synthase from Staphylococcus aureus (strain COL).